A 263-amino-acid polypeptide reads, in one-letter code: Zinc finger protein STAMENLESS 1 (263 aa).

Positions 1–51 are disordered; sequence MNSSRRQEGSPLDLNNLPDEFGKQTVESSTTTAASSAEASRVTKKKSNGGK. A compositionally biased stretch (low complexity) spans 25–40; sequence TVESSTTTAASSAEAS. The C2H2-type zinc finger occupies 58–80; that stretch reads YECRFCSLKFCKSQALGGHMNRH.

In terms of tissue distribution, expressed in leaf primordia, inflorescence meristem, rachis branch meristems, floral meristem and floral organ primordia.

It localises to the nucleus. Regulates floral organ identity and cell proliferation in the inner floral whorls. Probably specifies the identities of lodicule and stamen through positive regulation of MADS16 expression. May contribute to morphogenesis by suppressing OSH1 expression in the lateral organs. In Oryza sativa subsp. japonica (Rice), this protein is Zinc finger protein STAMENLESS 1 (SL1).